The primary structure comprises 129 residues: Small ribosomal subunit protein uS11 (129 aa).

Belongs to the universal ribosomal protein uS11 family. In terms of assembly, part of the 30S ribosomal subunit. Interacts with proteins S7 and S18. Binds to IF-3.

Located on the platform of the 30S subunit, it bridges several disparate RNA helices of the 16S rRNA. Forms part of the Shine-Dalgarno cleft in the 70S ribosome. This is Small ribosomal subunit protein uS11 from Parvibaculum lavamentivorans (strain DS-1 / DSM 13023 / NCIMB 13966).